Here is a 482-residue protein sequence, read N- to C-terminus: MPPSPLDDRVVVALSRPVRPQDLNLCLDSSYLGSAAPGSTSHPPVIATTVVSLKAANLTYMPSSSGSARSLNCGCSSASCCTVATYDKDNQAPTQAIAAGTATTAIGSSTTCPASQMVNNSENAGSLSPSGGVGSPMAGTPKQLASIKIIYPNDLAKKMTKCSKSHLPSQGPVIIDCRPFMEYNKSHIQGAVHINCADKISRRRLQQGKITVLDLISCREGKDSFKRIFSKEIIVYDENTNEPSRVVPSQPLHIVLESLKREGKEPLVLKGGLSSFKQNHENLCDNSLQLQECREVGGGASAASSMLPQSIPSTPDIENAELTPILPFLFLGNEQDAQDLETMQRLNIGYVINVTTHLPLYHYEKGLFNYKRLPATDSNKQNLRQYFEEAFEFIEEAHQCGKGLLIHCQAGVSRSATIVIAYLMKHTRMTMTDAYKFVKGKRPIISPNLNFMGQLLEFEEDLNNGVTPRILTPKLMGVETVV.

One can recognise a Rhodanese domain in the interval 168–285 (PSQGPVIIDC…FKQNHENLCD (118 aa)). The interval 199 to 215 (KISRRRLQQGKITVLDL) is interaction with MAP kinases. In terms of domain architecture, Tyrosine-protein phosphatase spans 321-464 (ELTPILPFLF…LLEFEEDLNN (144 aa)). Cys-408 (phosphocysteine intermediate) is an active-site residue.

Belongs to the protein-tyrosine phosphatase family. Non-receptor class dual specificity subfamily. As to quaternary structure, monomer. Interacts with MAPK14.

The protein resides in the cytoplasm. It localises to the nucleus. It catalyses the reaction O-phospho-L-tyrosyl-[protein] + H2O = L-tyrosyl-[protein] + phosphate. It carries out the reaction O-phospho-L-seryl-[protein] + H2O = L-seryl-[protein] + phosphate. The catalysed reaction is O-phospho-L-threonyl-[protein] + H2O = L-threonyl-[protein] + phosphate. Protein phosphatase involved in the inactivation of MAP kinases. Has a specificity for the MAPK11/MAPK12/MAPK13/MAPK14 subfamily. It preferably dephosphorylates p38. The sequence is that of Dual specificity protein phosphatase 10 (DUSP10) from Bos taurus (Bovine).